Here is a 219-residue protein sequence, read N- to C-terminus: MATREQQPEGRRLKVARIYLRASTDEQNLERQESLVAATRAAGYYVAGIYREKASGARADRPELLRMIADLQPGEVVVAEKIDRISRLPLAEAERLVASIRAKGAKLAVPGVVDLSELAAEANGVAKIVLESVQDMLLKLALQMARDDYEDRRERQRQGVQLAKAAGRYTGRKRDAGMHDRIITLRSGGSSIAKTAKLVGCSPSQVKRVWAAWNAQQQK.

A Resolvase/invertase-type recombinase catalytic domain is found at 15–159; sequence VARIYLRAST…EDRRERQRQG (145 aa). Residue Ser-23 is the O-(5'-phospho-DNA)-serine intermediate of the active site.

This sequence belongs to the site-specific recombinase resolvase family.

Involved in plasmid partition. The protein is Resolvase (parA) of Escherichia coli.